The sequence spans 382 residues: 3-dehydroquinate synthase (382 aa).

Residues 81-86 (EGEISK), 115-119 (GVVGD), 139-140 (TS), K152, and K161 each bind NAD(+). 3 residues coordinate Zn(2+): E194, H256, and H274.

It belongs to the sugar phosphate cyclases superfamily. Dehydroquinate synthase family. NAD(+) serves as cofactor. Requires Co(2+) as cofactor. It depends on Zn(2+) as a cofactor.

The protein localises to the cytoplasm. The enzyme catalyses 7-phospho-2-dehydro-3-deoxy-D-arabino-heptonate = 3-dehydroquinate + phosphate. It functions in the pathway metabolic intermediate biosynthesis; chorismate biosynthesis; chorismate from D-erythrose 4-phosphate and phosphoenolpyruvate: step 2/7. Its function is as follows. Catalyzes the conversion of 3-deoxy-D-arabino-heptulosonate 7-phosphate (DAHP) to dehydroquinate (DHQ). This chain is 3-dehydroquinate synthase, found in Bradyrhizobium diazoefficiens (strain JCM 10833 / BCRC 13528 / IAM 13628 / NBRC 14792 / USDA 110).